The sequence spans 674 residues: Slender lobes-like protein (674 aa).

3 disordered regions span residues 65-137, 168-321, and 352-382; these read LEKS…NASK, NELN…TIKK, and QKSR…RVEV. Residues 73–97 show a composition bias toward basic residues; it reads PKKKVQTKKHLPPVRKKDSVKRRRI. Residues 127–137 are compositionally biased toward polar residues; that stretch reads NQSNCSSNASK. Positions 216 to 228 are enriched in acidic residues; sequence VDSDDEEEQDQDQ. Basic and acidic residues predominate over residues 233-245; the sequence is KPAESENHSEIKK. S248 bears the Phosphoserine mark. The span at 272–312 shows a compositional bias: basic and acidic residues; sequence EDPKEAGKNEESDKDKPAENGKSDKDKQAETEMSDEDKPSE. Residues S358 and S391 each carry the phosphoserine modification. Disordered stretches follow at residues 395 to 585 and 618 to 659; these read MVAE…AGYV and KYFR…NSAK. Positions 400–410 are enriched in basic residues; the sequence is KRQKNKRKRLS. S414 carries the phosphoserine modification. Residues 548-558 show a composition bias toward basic residues; sequence AKQKKKGKKKQ.

This Drosophila melanogaster (Fruit fly) protein is Slender lobes-like protein.